The primary structure comprises 85 residues: Large ribosomal subunit protein bL27 (85 aa).

Residues 1 to 25 (MAHKKGVGSSRNGRDSNPKMLGVKR) form a disordered region.

Belongs to the bacterial ribosomal protein bL27 family.

The chain is Large ribosomal subunit protein bL27 from Roseiflexus castenholzii (strain DSM 13941 / HLO8).